The primary structure comprises 378 residues: Mannitol-1-phosphate 5-dehydrogenase (378 aa).

Serine 4–glycine 15 contacts NAD(+).

The protein belongs to the mannitol dehydrogenase family.

It carries out the reaction D-mannitol 1-phosphate + NAD(+) = beta-D-fructose 6-phosphate + NADH + H(+). In Streptococcus pneumoniae serotype 4 (strain ATCC BAA-334 / TIGR4), this protein is Mannitol-1-phosphate 5-dehydrogenase.